Here is a 183-residue protein sequence, read N- to C-terminus: Large ribosomal subunit protein eL18 (183 aa).

The disordered stretch occupies residues 151–183; that stretch reads HFGPAPGAPRSHTKPYVRSKGHEQAKPSRRSNV.

This sequence belongs to the eukaryotic ribosomal protein eL18 family.

It localises to the cytoplasm. This Plutella xylostella (Diamondback moth) protein is Large ribosomal subunit protein eL18 (RpL18).